The following is an 816-amino-acid chain: Phosphatidylinositol 4-kinase beta (816 aa).

Disordered regions lie at residues 1 to 29 (MGDM…GGSL), 99 to 121 (EEED…RRRQ), and 250 to 318 (RKRE…SFSS). Position 2 is an N-acetylglycine (G2). The tract at residues 2–68 (GDMVVEPATL…VKLLHGGVAI (67 aa)) is interaction with ACBD3. Residues 10–29 (TLKPTSEPTPSPSGNNGGSL) are compositionally biased toward low complexity. In terms of domain architecture, PIK helical spans 61-242 (LLHGGVAISS…GTKLRKLILS (182 aa)). At S258 the chain carries Phosphoserine. T263 bears the Phosphothreonine mark. 5 positions are modified to phosphoserine: S266, S275, S277, S284, and S294. 2 stretches are compositionally biased toward polar residues: residues 278-297 (DATA…SNPK) and 306-318 (SSST…SFSS). Position 428 is a phosphoserine (S428). At T438 the chain carries Phosphothreonine. S511 is subject to Phosphoserine. Residues T517 and T519 each carry the phosphothreonine modification. The PI3K/PI4K catalytic domain occupies 535 to 801 (EPWQEKVRRI…MVDGSMRSIT (267 aa)). Residues 541–547 (VRRIREG) are G-loop. The segment at 668-676 (QVKDRHNGN) is catalytic loop. The activation loop stretch occupies residues 687 to 711 (HIDFGFILSSSPRNLGFETSAFKLT).

The protein belongs to the PI3/PI4-kinase family. Type III PI4K subfamily. Interacts with ARF1 and ARF3 in the Golgi complex, but not with ARF4, ARF5 or ARF6. Interacts with NCS1/FREQ in a calcium-independent manner. Interacts with CALN1/CABP8 and CALN2/CABP7; in a calcium-dependent manner; this interaction competes with NCS1/FREQ binding. Interacts with ACBD3. Interacts with ARMH3, YWHAB, YWHAE, YWHAG, YWHAH, YWHAQ, YWHAZ and SFN. Interacts with GGA2 (via VHS domain); the interaction is important for PI4KB location at the Golgi apparatus membrane. Interacts with ATG9A. Requires Mg(2+) as cofactor. It depends on Mn(2+) as a cofactor. As to expression, strongly expressed in brain, kidney, lung, small intestine, uterus and adrenal gland. Weaker expression in liver, heart, skeletal muscle, thymus and testis. Not detected in spleen.

It is found in the golgi apparatus. It localises to the endomembrane system. The protein localises to the mitochondrion outer membrane. The protein resides in the rough endoplasmic reticulum membrane. Its subcellular location is the golgi apparatus membrane. The enzyme catalyses a 1,2-diacyl-sn-glycero-3-phospho-(1D-myo-inositol) + ATP = a 1,2-diacyl-sn-glycero-3-phospho-(1D-myo-inositol 4-phosphate) + ADP + H(+). Its activity is regulated as follows. Inhibited by wortmannin. Increased kinase activity upon interaction with NCS1/FREQ. Phosphorylates phosphatidylinositol (PI) in the first committed step in the production of the second messenger inositol-1,4,5,-trisphosphate (PIP). May regulate Golgi disintegration/reorganization during mitosis, possibly via its phosphorylation. Involved in Golgi-to-plasma membrane trafficking. May play an important role in the inner ear development. The polypeptide is Phosphatidylinositol 4-kinase beta (Pi4kb) (Rattus norvegicus (Rat)).